An 833-amino-acid polypeptide reads, in one-letter code: Leucine--tRNA ligase (833 aa).

The 'HIGH' region motif lies at proline 41 to histidine 52. The 'KMSKS' region motif lies at lysine 610 to serine 614. Lysine 613 is an ATP binding site.

It belongs to the class-I aminoacyl-tRNA synthetase family.

Its subcellular location is the cytoplasm. It catalyses the reaction tRNA(Leu) + L-leucine + ATP = L-leucyl-tRNA(Leu) + AMP + diphosphate. This is Leucine--tRNA ligase from Streptococcus thermophilus (strain CNRZ 1066).